We begin with the raw amino-acid sequence, 362 residues long: Phosphoserine aminotransferase (362 aa).

Residue Arg-42 coordinates L-glutamate. Residues 76-77 (AR), Trp-102, Thr-152, Asp-172, and Gln-195 contribute to the pyridoxal 5'-phosphate site. Lys-196 is modified (N6-(pyridoxal phosphate)lysine). 237 to 238 (NT) is a pyridoxal 5'-phosphate binding site.

Belongs to the class-V pyridoxal-phosphate-dependent aminotransferase family. SerC subfamily. As to quaternary structure, homodimer. Pyridoxal 5'-phosphate serves as cofactor.

Its subcellular location is the cytoplasm. The enzyme catalyses O-phospho-L-serine + 2-oxoglutarate = 3-phosphooxypyruvate + L-glutamate. It catalyses the reaction 4-(phosphooxy)-L-threonine + 2-oxoglutarate = (R)-3-hydroxy-2-oxo-4-phosphooxybutanoate + L-glutamate. The protein operates within amino-acid biosynthesis; L-serine biosynthesis; L-serine from 3-phospho-D-glycerate: step 2/3. It functions in the pathway cofactor biosynthesis; pyridoxine 5'-phosphate biosynthesis; pyridoxine 5'-phosphate from D-erythrose 4-phosphate: step 3/5. In terms of biological role, catalyzes the reversible conversion of 3-phosphohydroxypyruvate to phosphoserine and of 3-hydroxy-2-oxo-4-phosphonooxybutanoate to phosphohydroxythreonine. This Haemophilus influenzae (strain ATCC 51907 / DSM 11121 / KW20 / Rd) protein is Phosphoserine aminotransferase.